The primary structure comprises 182 residues: MGRYSREPDVASKTCKARGSNLRVHFKNTRETAMAIKKMSLRRAQAFLKNVTDHKECVPFRRFNGGVGRCSQAKQWGTTQGRWPKKSAEFLLQMLRNAESNADYSGLDVDRLVIEHIQVNRAPCLRRRTYRAHGRINPYMSSPCHIEMWLTEAESGVDGAKQGKKKKKTDGVEKATTKRQKQ.

Residues S155–Q182 are disordered.

It belongs to the universal ribosomal protein uL22 family.

The polypeptide is Large ribosomal subunit protein uL22 (RpL17) (Carabus granulatus (Ground beetle)).